Consider the following 249-residue polypeptide: UPF0246 protein Lreu_0493 (249 aa).

This sequence belongs to the UPF0246 family.

This chain is UPF0246 protein Lreu_0493, found in Limosilactobacillus reuteri (strain DSM 20016) (Lactobacillus reuteri).